A 386-amino-acid polypeptide reads, in one-letter code: Skeletal aspartic acid-rich protein 1 (386 aa).

The N-terminal stretch at 1–24 (MAFVSCFHLRLLFLCLALFMAAEC) is a signal peptide. Disordered stretches follow at residues 33-145 (VDSD…PFSL) and 244-291 (EVTD…DCPH). Positions 63–107 (YDASDDNDNDNDDDDNNDNDNDNDDDNDVDRDNDNDDDDFDDSND) are enriched in acidic residues. 2 stretches are compositionally biased toward basic and acidic residues: residues 133–142 (HSVESFEDRP) and 244–265 (EVTD…KDTP). A compositionally biased stretch (acidic residues) spans 266-288 (DTDSDPDDSSDNANDGDDDDDDD).

In terms of tissue distribution, component of the acid-insoluble and acid-soluble organic matrix of the aragonitic skeleton (at protein level).

Its subcellular location is the secreted. This Acropora millepora (Staghorn coral) protein is Skeletal aspartic acid-rich protein 1.